The following is a 490-amino-acid chain: GTPase Der (490 aa).

2 consecutive EngA-type G domains span residues P3–V166 and I203–T376. Residues G9 to S16, D56 to I60, N118 to D121, G209 to S216, D256 to V260, and N321 to D324 contribute to the GTP site. A KH-like domain is found at R377 to E461.

This sequence belongs to the TRAFAC class TrmE-Era-EngA-EngB-Septin-like GTPase superfamily. EngA (Der) GTPase family. Associates with the 50S ribosomal subunit.

Functionally, GTPase that plays an essential role in the late steps of ribosome biogenesis. This Citrobacter koseri (strain ATCC BAA-895 / CDC 4225-83 / SGSC4696) protein is GTPase Der.